A 335-amino-acid chain; its full sequence is Arylacetonitrilase (335 aa).

Residues 6–291 form the CN hydrolase domain; that stretch reads LKVAITQAQP…EGIVYADLDM (286 aa). Glu46 functions as the Proton acceptor in the catalytic mechanism. Lys127 is an active-site residue. Residue Cys168 is the Nucleophile of the active site.

This sequence belongs to the carbon-nitrogen hydrolase superfamily. Nitrilase family.

It catalyses the reaction a nitrile + 2 H2O = a carboxylate + NH4(+). The enzyme catalyses 4-chlorophenylacetonitrile + 2 H2O = 4-chlorophenylacetate + NH4(+). Functionally, nitrilase that hydrolyzes preferentially phenylacetonitrile, (R,S)-mandelonitrile, and 3-indolylacetonitrile. The polypeptide is Arylacetonitrilase (Arthroderma benhamiae (strain ATCC MYA-4681 / CBS 112371) (Trichophyton mentagrophytes)).